The sequence spans 1182 residues: MSLVYFASGDSKADIEYQTISSTATQVSQEQSERLHDRISKAQLQKLYELFKSAPGQVVGCGDLRRMLEDVDITFNDFAYTRLFLKINQNHDFMVDWNEFVSYLIFGFQEEDPSSQKEALIMPISMAPVVRKTEHRSAVCCITLLKVKSDQTPMEEITESANYSFGGEDSPENSGMWVTASHEGQLRFWSAHMEPLRSAVSESIYCMSYAFYNNGKTHSKLVLGDYAGNVRILSYSPYLRGPFQAKPGAALVELVWADVLRGRIPLLIPREYINLHNELISCVYFSLHMNTLFASAEYRNTKKYRGRCPGLIMVSNEDRNNFRIPLGVSVFYVSEIKNILVTGGPDTFVRIWDVYISSEPSAILTGHNGGIVAVFVQPEENKVYSVDYHKIIKVWDLQEHTLLQTYGDLVRIIHHSETDIKYYYHSHLRELMVAGRKLIQIKCCPRVRVDLTDGNTHAAPVSVVLYNRLFRNIVTCGLDSYIIVWDPWTGRRKIIMKNCHTKMIYGETIDIEITAACFDPLEQFLLTGARDGSLKIWNYNNAVVVRNMSIQPDQEVTAVIWVVDRILAMGWDRQVTEFNDVEGREYGDPKKWAKFHTDDITCADVKLGEGVVTATYSGEIIFWKLETGQPYRRYNVMDPSRFIELKLNAEEEKLTRRSKRMSSLIGVNRRSTSVQAIKPDEIKDYGANIPVSVQAVLFLQRRPMTKEHGSVFISLDTGIIQVYSHHQHGGYIKQFTAVHKTGDCVLTMATDRKNRFLYTGTAFGYIKVWHIVNYCIPKAEQTYVCMPRLRLEFIFLRKELFLTRAKRMVRFQPEPMLVSSYKGHLKAINSIGFINLPKIIFSGSHDYSCRLWTQGGRYLGTLGTVLPWSKLTPFERAGEDNRAYRLPPDIKKVASSTTLKVISGIQHSFTLKRPKAAEEREEEREVEDTTTDVKNMFERPLREPILGKHFQLPGRSAIEQRIELDTTQLYIPVYTHLRVYPSEMLEALPTSPIISQVKAENYLDHYMPVVGKVDLNTSAINIKEPQKLARTKAGANLDQPRASAGWAKPKTNSILGIPRAGSSLGKARASVSQGSPKAGVSSGYGKVSVSQGYPRAGSPRPCTTSLSKPKTSSSPSKPKGSFRLGSPIAATSPANADSSPGKRKSSPGKRSFSPGKAKASPGKARISSVLGKPKAKTDRETH.

8 WD repeats span residues 155 to 199, 323 to 362, 366 to 405, 456 to 495, 508 to 547, 595 to 635, 740 to 779, and 823 to 862; these read EEIT…LRSA, RIPL…EPSA, GHNG…LLQT, THAA…RKII, TIDI…VVRN, FHTD…RRYN, KTGD…IPKA, and GHLK…LGTL. Residues 1031–1182 form a disordered region; it reads TKAGANLDQP…PKAKTDRETH (152 aa). Composition is skewed to low complexity over residues 1079–1092 and 1103–1121; these read GVSS…VSQG and TTSL…PKGS.

The sequence is that of WD repeat-containing protein on Y chromosome from Drosophila virilis (Fruit fly).